The following is a 524-amino-acid chain: Cytosolic Fe-S cluster assembly factor NAR1 (524 aa).

Positions 20, 52, 55, 58, 158, and 206 each coordinate [4Fe-4S] cluster. The interval 362–388 is disordered; sequence IRKRPTANGNDNSISLSSSINNQDNNN. The span at 369–388 shows a compositional bias: low complexity; that stretch reads NGNDNSISLSSSINNQDNNN. The [4Fe-4S] cluster site is built by C408 and C412. A disordered region spans residues 501-524; sequence SSISETHNGDSKNTIEQPVQFTTW.

The protein belongs to the NARF family.

In terms of biological role, component of the cytosolic Fe/S protein assembly machinery. Required for maturation of extramitochondrial Fe/S proteins. May play a role in the transfer of pre-assembled Fe/S clusters to target apoproteins. This chain is Cytosolic Fe-S cluster assembly factor NAR1 (NAR1), found in Vanderwaltozyma polyspora (strain ATCC 22028 / DSM 70294 / BCRC 21397 / CBS 2163 / NBRC 10782 / NRRL Y-8283 / UCD 57-17) (Kluyveromyces polysporus).